Reading from the N-terminus, the 251-residue chain is Proteasome subunit alpha type-7 (251 aa).

The protein belongs to the peptidase T1A family. In terms of assembly, the 26S proteasome consists of a 20S proteasome core and two 19S regulatory subunits. The 20S proteasome core is composed of 28 subunits that are arranged in four stacked rings, resulting in a barrel-shaped structure. The two end rings are each formed by seven alpha subunits, and the two central rings are each formed by seven beta subunits. The catalytic chamber with the active sites is on the inside of the barrel.

The protein resides in the cytoplasm. It is found in the nucleus. Functionally, the proteasome is a multicatalytic proteinase complex which is characterized by its ability to cleave peptides with Arg, Phe, Tyr, Leu, and Glu adjacent to the leaving group at neutral or slightly basic pH. The proteasome has an ATP-dependent proteolytic activity. This Carassius auratus (Goldfish) protein is Proteasome subunit alpha type-7 (psma7).